Consider the following 671-residue polypeptide: DNA ligase (671 aa).

Residues Asp36–Asp40, Ser85–Met86, and Glu115 contribute to the NAD(+) site. Lys117 acts as the N6-AMP-lysine intermediate in catalysis. Residues Arg138, Glu172, Lys287, and Lys311 each contribute to the NAD(+) site. Zn(2+) is bound by residues Cys405, Cys408, Cys423, and Cys428. Residues Ala588–Lys671 enclose the BRCT domain.

The protein belongs to the NAD-dependent DNA ligase family. LigA subfamily. It depends on Mg(2+) as a cofactor. The cofactor is Mn(2+).

The enzyme catalyses NAD(+) + (deoxyribonucleotide)n-3'-hydroxyl + 5'-phospho-(deoxyribonucleotide)m = (deoxyribonucleotide)n+m + AMP + beta-nicotinamide D-nucleotide.. Its function is as follows. DNA ligase that catalyzes the formation of phosphodiester linkages between 5'-phosphoryl and 3'-hydroxyl groups in double-stranded DNA using NAD as a coenzyme and as the energy source for the reaction. It is essential for DNA replication and repair of damaged DNA. The polypeptide is DNA ligase (Lactobacillus delbrueckii subsp. bulgaricus (strain ATCC 11842 / DSM 20081 / BCRC 10696 / JCM 1002 / NBRC 13953 / NCIMB 11778 / NCTC 12712 / WDCM 00102 / Lb 14)).